Reading from the N-terminus, the 1357-residue chain is DNA-directed RNA polymerase subunit beta (1357 aa).

The protein belongs to the RNA polymerase beta chain family. As to quaternary structure, the RNAP catalytic core consists of 2 alpha, 1 beta, 1 beta' and 1 omega subunit. When a sigma factor is associated with the core the holoenzyme is formed, which can initiate transcription.

The catalysed reaction is RNA(n) + a ribonucleoside 5'-triphosphate = RNA(n+1) + diphosphate. Its function is as follows. DNA-dependent RNA polymerase catalyzes the transcription of DNA into RNA using the four ribonucleoside triphosphates as substrates. The sequence is that of DNA-directed RNA polymerase subunit beta from Neorickettsia sennetsu (Ehrlichia sennetsu).